A 340-amino-acid chain; its full sequence is Extracellular matrix protein-binding protein emp (340 aa).

A signal peptide spans 1–26; that stretch reads MKKKLLVLTMSTLFATQIMNSNHAKA.

The protein resides in the cell surface. Functionally, adhesin that binds to the host cell extracellular matrix proteins fibronectin, fibrinogen, collagen, and vitronectin. This chain is Extracellular matrix protein-binding protein emp (emp), found in Staphylococcus aureus (strain MSSA476).